The sequence spans 717 residues: Ferric reduction oxidase 3, mitochondrial (717 aa).

Residues 1–23 (MAARGRLVVARGNRSFSSIIRKY) constitute a mitochondrion transit peptide. 6 helical membrane passes run 40–59 (LLTM…MPTS), 86–104 (LLVY…SIYL), 140–163 (LGIV…WSLA), 232–255 (YHIW…CIYW), 306–330 (THYL…LISF), and 353–373 (LVSA…KNPM). The region spanning 198–317 (GLTGNICLGF…YLYMVFMLFF (120 aa)) is the Ferric oxidoreductase domain. Positions 233, 247, 307, and 320 each coordinate heme. Positions 346-451 (QSRNNVKLVS…EGPYGPASTD (106 aa)) constitute an FAD-binding FR-type domain. 395 to 398 (HPFT) contacts FAD. Residue 443–446 (GPYG) coordinates NAD(+). 2 helical membrane passes run 564-586 (WLWL…AIIS) and 606-627 (SLIY…AMLC).

Belongs to the ferric reductase (FRE) family. FAD serves as cofactor. In terms of tissue distribution, expressed in root steele. Detected in shoots, leaves, stems, siliques, flowers and cotyledons.

It localises to the mitochondrion membrane. The enzyme catalyses 2 a Fe(II)-siderophore + NAD(+) + H(+) = 2 a Fe(III)-siderophore + NADH. Its function is as follows. Ferric chelate reductase involved in iron reduction in roots. May participate in the transport of electrons to a Fe(3+) ion via FAD and heme intermediates. The chain is Ferric reduction oxidase 3, mitochondrial (FRO3) from Arabidopsis thaliana (Mouse-ear cress).